Consider the following 252-residue polypeptide: tRNA-cytidine(32) 2-sulfurtransferase (252 aa).

Positions 37–42 (SGGKDS) match the PP-loop motif motif. [4Fe-4S] cluster-binding residues include cysteine 112, cysteine 115, and cysteine 202.

It belongs to the TtcA family. Homodimer. Mg(2+) serves as cofactor. Requires [4Fe-4S] cluster as cofactor.

It localises to the cytoplasm. The catalysed reaction is cytidine(32) in tRNA + S-sulfanyl-L-cysteinyl-[cysteine desulfurase] + AH2 + ATP = 2-thiocytidine(32) in tRNA + L-cysteinyl-[cysteine desulfurase] + A + AMP + diphosphate + H(+). The protein operates within tRNA modification. Functionally, catalyzes the ATP-dependent 2-thiolation of cytidine in position 32 of tRNA, to form 2-thiocytidine (s(2)C32). The sulfur atoms are provided by the cysteine/cysteine desulfurase (IscS) system. The protein is tRNA-cytidine(32) 2-sulfurtransferase of Geotalea uraniireducens (strain Rf4) (Geobacter uraniireducens).